Reading from the N-terminus, the 406-residue chain is Probable endo-xylogalacturonan hydrolase A (406 aa).

Positions 1–18 (MISLNSIFLLSLVGLSRA) are cleaved as a signal peptide. The tract at residues 20-49 (PSRSETSPDRTIKPRAACTPTAGGSSSTDD) is disordered. PbH1 repeat units lie at residues 183-213 (TSNA…DIGA), 214-235 (STYV…AFKP), 237-257 (ANYV…SVGS), 266-289 (VQNV…KTYP), 299-320 (VKNA…QIQS), and 368-390 (TCDV…ILCG). D228 functions as the Proton donor in the catalytic mechanism. A glycan (N-linked (GlcNAc...) asparagine) is linked at N244. Residue H251 is part of the active site. 3 N-linked (GlcNAc...) asparagine glycosylation sites follow: N273, N278, and N301.

Belongs to the glycosyl hydrolase 28 family.

Its subcellular location is the secreted. In terms of biological role, pectinolytic enzyme involved in the degradation of xylogalacturonan (xga), a galacturonan backbone heavily substituted with xylose, and which is one important component of the hairy regions of pectin. Activity requires a galacturonic acid backbone substituted with xylose. The polypeptide is Probable endo-xylogalacturonan hydrolase A (xghA) (Aspergillus flavus (strain ATCC 200026 / FGSC A1120 / IAM 13836 / NRRL 3357 / JCM 12722 / SRRC 167)).